The sequence spans 61 residues: uncharacterized protein (61 aa).

This is an uncharacterized protein from Escherichia coli (Bacteriophage T4).